We begin with the raw amino-acid sequence, 691 residues long: MAPVEDGGGVEFPVGMKVLVVDDDPTCLAVLKRMLLECRYDATTCSQATRALTMLRENRRGFDVIISDVHMPDMDGFRLLELVGLEMDLPVIMMSADSRTDIVMKGIKHGACDYLIKPVRMEELKNIWQHVIRKKFNENKEHEHSGSLDDTDRTRPTNNDNEYASSANDGAEGSWKSQKKKRDKDDDDGELESGDPSSTSKKPRVVWSVELHQQFVNAVNHLGIDKAVPKKILELMNVPGLTRENVASHLQKFRLYLKRIAQHHAGIANPFCPPASSGKVGSLGGLDFQALAASGQIPPQALAALQDELLGRPTNSLVLPGRDQSSLRLAAVKGNKPHGEREIAFGQPIYKCQNNAYGAFPQSSPAVGGMPSFSAWPNNKLGMADSTGTLGGMSNSQNSNIVLHELQQQPDAMLSGTLHSLDVKPSGIVMPSQSLNTFSASEGLSPNQNTLMIPAQSSGFLAAMPPSMKHEPVLATSQPSSSLLGGIDLVNQASTSQPLISAHGGGNLSGLVNRNPNVVPSQGISTFHTPNNPYLVSPNSMGMGSKQPPGVLKTENSDALNHSYGYLGGSNPPMDSGLLSSQSKNTQFGLLGQDDITGSWSPLPNVDSYGNTVGLSHPGSSSSSFQSSNVALGKLPDQGRGKNHGFVGKGTCIPSRFAVDEIESPTNNLSHSIGSSGDIMSPDIFGFSGQM.

Residues 17 to 132 enclose the Response regulatory domain; the sequence is KVLVVDDDPT…ELKNIWQHVI (116 aa). Asp-68 is modified (4-aspartylphosphate). Basic and acidic residues predominate over residues 139-155; it reads NKEHEHSGSLDDTDRTR. Positions 139-204 are disordered; sequence NKEHEHSGSL…DPSSTSKKPR (66 aa). Positions 199–258 form a DNA-binding region, myb-like GARP; it reads TSKKPRVVWSVELHQQFVNAVNHLGIDKAVPKKILELMNVPGLTRENVASHLQKFRLYLK.

It belongs to the ARR family. Type-B subfamily. Two-component system major event consists of a His-to-Asp phosphorelay between a sensor histidine kinase (HK) and a response regulator (RR). In plants, the His-to-Asp phosphorelay involves an additional intermediate named Histidine-containing phosphotransfer protein (HPt). This multistep phosphorelay consists of a His-Asp-His-Asp sequential transfer of a phosphate group between first a His and an Asp of the HK protein, followed by the transfer to a conserved His of the HPt protein and finally the transfer to an Asp in the receiver domain of the RR protein.

Its subcellular location is the nucleus. Its function is as follows. Transcriptional activator that binds specific DNA sequence. Functions as a response regulator involved in His-to-Asp phosphorelay signal transduction system. Phosphorylation of the Asp residue in the receiver domain activates the ability of the protein to promote the transcription of target genes. May directly activate some type-A response regulators in response to cytokinins. In Oryza sativa subsp. japonica (Rice), this protein is Two-component response regulator ORR21.